The following is a 772-amino-acid chain: Protein transport protein SEC23 F (772 aa).

Positions 65, 68, 87, and 90 each coordinate Zn(2+). The zinc finger-like stretch occupies residues 65–90 (CKTCKALLNAFARVDFAAMNWVCPFC).

Belongs to the SEC23/SEC24 family. SEC23 subfamily. In terms of assembly, component of the coat protein complex II (COPII), composed of at least five proteins: the Sec23/24 complex, the Sec13/31 complex and Sar1. Interacts with SEC24A.

The protein localises to the cytoplasmic vesicle. It is found in the COPII-coated vesicle membrane. The protein resides in the endoplasmic reticulum membrane. It localises to the membrane. Component of the coat protein complex II (COPII) which promotes the formation of transport vesicles from the endoplasmic reticulum (ER). The coat has two main functions, the physical deformation of the endoplasmic reticulum membrane into vesicles and the selection of cargo molecules. This chain is Protein transport protein SEC23 F, found in Arabidopsis thaliana (Mouse-ear cress).